A 2375-amino-acid chain; its full sequence is CCR4-NOT transcription complex subunit 1 (2375 aa).

3 consecutive short sequence motifs (LXXLL) follow at residues 153 to 157 (LPDLL), 181 to 185 (LHLLL), and 223 to 227 (LAPLL). Ser-318 is subject to Phosphoserine. Positions 570–574 (LSMLL) match the LXXLL motif. The interval 725 to 770 (SAAPHTQSMQGFPPNLGSAFSTPQSPAKAFPPLSTPNQTTAFSGIG) is disordered. The segment at 799–1014 (NNDPFVQRKL…QGSITTPGSI (216 aa)) is interaction with ZFP36. A Phosphoserine modification is found at Ser-1060. Positions 1089–1604 (EPPENIQEKI…AQPMKQAWAT (516 aa)) are interaction with CNOT6, CNOT6L, CNOT7 and CNOT8. A compositionally biased stretch (basic and acidic residues) spans 1314-1326 (QLSAPKKDVKQPE). The tract at residues 1314 to 1351 (QLSAPKKDVKQPEELPAITTTTTSTTPATSTTCTATVP) is disordered. A compositionally biased stretch (low complexity) spans 1332–1349 (TTTTTSTTPATSTTCTAT). 3 short sequence motifs (LXXLL) span residues 1638–1642 (LRSLL), 1941–1945 (LIALL), and 2095–2099 (LRVLL).

The protein belongs to the CNOT1 family. Component of the CCR4-NOT complex; distinct complexes seem to exist that differ in the participation of probably mutually exclusive catalytic subunits. In the complex, interacts directly with CNOT6, CNOT6L, CNOT7 or CNOT8. Interacts in a ligand-dependent fashion with ESR1 and RXRA. Interacts with NANOS2, TOB1 and ZFP36. Interacts with TNRC6A, TNRC6B or TNRC6C; the interactions are direct. Interacts with YTHDF2; the interaction is direct and promotes recruitment of the CCR4-NOT complex to N6-methyladenosine (m6A)-containing mRNAs, leading to their deadenylation and subsequent degradation. Interacts with EIF4ENIF1/4E-T. Interacts in an RNA-independent manner with BICC1 (via KH domains). Interacts with TEX13A; the interaction may inhibit CNOT1 binding to mRNA and subsequently CNOT1-mediated mRNA degradation.

It is found in the cytoplasm. Its subcellular location is the P-body. The protein localises to the nucleus. Its function is as follows. Scaffolding component of the CCR4-NOT complex which is one of the major cellular mRNA deadenylases and is linked to various cellular processes including bulk mRNA degradation, miRNA-mediated repression, translational repression during translational initiation and general transcription regulation. Additional complex functions may be a consequence of its influence on mRNA expression. Its scaffolding function implies its interaction with the catalytic complex module and diverse RNA-binding proteins mediating the complex recruitment to selected mRNA 3'UTRs. Involved in degradation of AU-rich element (ARE)-containing mRNAs probably via association with ZFP36. Mediates the recruitment of the CCR4-NOT complex to miRNA targets and to the RISC complex via association with TNRC6A, TNRC6B or TNRC6C. Acts as a transcriptional repressor. Represses the ligand-dependent transcriptional activation by nuclear receptors. Involved in the maintenance of embryonic stem (ES) cell identity; prevents their differentiation towards extraembryonic trophectoderm lineages. Plays a role in rapid sperm motility via mediating timely mRNA turnover. The chain is CCR4-NOT transcription complex subunit 1 (Cnot1) from Mus musculus (Mouse).